Reading from the N-terminus, the 246-residue chain is Large ribosomal subunit protein uL3 (246 aa).

Disordered stretches follow at residues 140–162 and 215–246; these read SHRSIGSTGGRQDPGKTFKNKKM and DVPLPGKFRENGSAGASQVEAAPEAPASEENA. Residue Gln151 is modified to N5-methylglutamine. Positions 234–246 are enriched in low complexity; it reads EAAPEAPASEENA.

Belongs to the universal ribosomal protein uL3 family. Part of the 50S ribosomal subunit. Forms a cluster with proteins L14 and L19. Methylated by PrmB.

Functionally, one of the primary rRNA binding proteins, it binds directly near the 3'-end of the 23S rRNA, where it nucleates assembly of the 50S subunit. The protein is Large ribosomal subunit protein uL3 of Methylorubrum populi (strain ATCC BAA-705 / NCIMB 13946 / BJ001) (Methylobacterium populi).